Here is a 91-residue protein sequence, read N- to C-terminus: YcgL domain-containing protein ESA_01460 (91 aa).

Residues 1–85 (MFCVIYRSAR…PPENLLKQHL (85 aa)) form the YcgL domain.

This is YcgL domain-containing protein ESA_01460 from Cronobacter sakazakii (strain ATCC BAA-894) (Enterobacter sakazakii).